The sequence spans 118 residues: Large ribosomal subunit protein uL24 (118 aa).

Positions methionine 1 to valine 24 are disordered.

It belongs to the universal ribosomal protein uL24 family. Part of the 50S ribosomal subunit.

Its function is as follows. One of two assembly initiator proteins, it binds directly to the 5'-end of the 23S rRNA, where it nucleates assembly of the 50S subunit. In terms of biological role, located at the polypeptide exit tunnel on the outside of the subunit. The polypeptide is Large ribosomal subunit protein uL24 (Halobacterium salinarum (strain ATCC 700922 / JCM 11081 / NRC-1) (Halobacterium halobium)).